Reading from the N-terminus, the 451-residue chain is Gamma-aminobutyric acid receptor subunit alpha-2 (451 aa).

The signal sequence occupies residues 1-28 (MRTKLSTCNVWFPLLVLLVWNPARLVLA). The Extracellular segment spans residues 29–249 (NIQEDEAKNN…MTAHFHLKRK (221 aa)). Asparagine 38 carries an N-linked (GlcNAc...) asparagine glycan. Arginine 94 contributes to the 4-aminobutanoate binding site. Residues asparagine 114 and asparagine 138 are each glycosylated (N-linked (GlcNAc...) asparagine). Threonine 157 contributes to the 4-aminobutanoate binding site. The cysteines at positions 166 and 180 are disulfide-linked. The next 3 helical transmembrane spans lie at 250-270 (IGYFVIQTYLPCIMTVILSQV), 281-300 (ARTVFGVTTVLTMTTLSISA), and 312-332 (AMDWFIAVCYAFVFSALIEFA). Topologically, residues 333 to 420 (TVNYFTKRGW…FNSVSKIDRM (88 aa)) are cytoplasmic. The segment at 389 to 408 (KSATTPEPNKKPENKPAEAK) is disordered. A compositionally biased stretch (basic and acidic residues) spans 396–408 (PNKKPENKPAEAK). Residues 421–441 (SRIVFPVLFGTFNLVYWATYL) traverse the membrane as a helical segment. Topologically, residues 442-451 (NREPVLGVSP) are extracellular.

This sequence belongs to the ligand-gated ion channel (TC 1.A.9) family. Gamma-aminobutyric acid receptor (TC 1.A.9.5) subfamily. GABRA2 sub-subfamily. Heteropentamer, formed by a combination of alpha (GABRA1-6), beta (GABRB1-3), gamma (GABRG1-3), delta (GABRD), epsilon (GABRE), rho (GABRR1-3), pi (GABRP) and theta (GABRQ) subunits, each subunit exhibiting distinct physiological and pharmacological properties. Binds UBQLN1. Interacts with KIF21B. Interacts with LHFPL4. Interacts with SHISA7; interaction leads to the regulation of GABA(A) receptor trafficking, channel deactivation kinetics and pharmacology. In terms of processing, glycosylated. As to expression, expressed in brain (at protein level).

The protein localises to the postsynaptic cell membrane. Its subcellular location is the cell membrane. The protein resides in the cytoplasmic vesicle membrane. It localises to the cell projection. It is found in the dendrite. It catalyses the reaction chloride(in) = chloride(out). With respect to regulation, activated by pentobarbital. Inhibited by the antagonist bicuculline. Its function is as follows. Alpha subunit of the heteropentameric ligand-gated chloride channel gated by gamma-aminobutyric acid (GABA), a major inhibitory neurotransmitter in the brain. GABA-gated chloride channels, also named GABA(A) receptors (GABAAR), consist of five subunits arranged around a central pore and contain GABA active binding site(s) located at the alpha and beta subunit interface(s). When activated by GABA, GABAARs selectively allow the flow of chloride anions across the cell membrane down their electrochemical gradient. Chloride influx into the postsynaptic neuron following GABAAR opening decreases the neuron ability to generate a new action potential, thereby reducing nerve transmission. The alpha-2 subunit exhibits synaptogenic activity together with beta-2 and very little to no activity together with beta-3, the gamma-2 subunit being necessary but not sufficient to induce rapid synaptic contacts formation. This Rattus norvegicus (Rat) protein is Gamma-aminobutyric acid receptor subunit alpha-2.